The primary structure comprises 360 residues: RGG repeats nuclear RNA binding protein B (360 aa).

2 disordered regions span residues 1–216 (MASV…DKEM) and 250–360 (MQQL…TLGK). At Ala2 the chain carries N-acetylalanine. Residues 58–77 (PGGGRGAGRGGSYGRGGRGG) are compositionally biased toward gly residues. 2 stretches are compositionally biased toward basic and acidic residues: residues 99–108 (RRSEEGDGAR) and 132–157 (DSER…RDGA). Residues 162–176 (WGTTQDDITPVTEES) show a composition bias toward polar residues. Basic and acidic residues-rich tracts occupy residues 184 to 216 (LTVE…DKEM), 258 to 283 (SNND…EKTR), and 311 to 336 (REGR…RNQR). The 66-residue stretch at 223 to 288 (KVLEEKKKAL…EEKTRKSLSI (66 aa)) folds into the FF domain. The residue at position 258 (Ser258) is a Phosphoserine.

This sequence belongs to the SERBP1-HABP4 family.

The protein localises to the nucleus. The protein resides in the cytoplasm. It is found in the perinuclear region. In terms of biological role, ribosome-binding protein that acts as a regulator of mRNA translation by promoting ribosome inactivation. Binds RNA. The protein is RGG repeats nuclear RNA binding protein B of Arabidopsis thaliana (Mouse-ear cress).